Reading from the N-terminus, the 294-residue chain is Bifunctional protein FolD (294 aa).

NADP(+)-binding positions include 166-168, Ser-191, and Ile-232; that span reads GRS.

This sequence belongs to the tetrahydrofolate dehydrogenase/cyclohydrolase family. In terms of assembly, homodimer.

The enzyme catalyses (6R)-5,10-methylene-5,6,7,8-tetrahydrofolate + NADP(+) = (6R)-5,10-methenyltetrahydrofolate + NADPH. It carries out the reaction (6R)-5,10-methenyltetrahydrofolate + H2O = (6R)-10-formyltetrahydrofolate + H(+). It participates in one-carbon metabolism; tetrahydrofolate interconversion. Its function is as follows. Catalyzes the oxidation of 5,10-methylenetetrahydrofolate to 5,10-methenyltetrahydrofolate and then the hydrolysis of 5,10-methenyltetrahydrofolate to 10-formyltetrahydrofolate. This is Bifunctional protein FolD from Afipia carboxidovorans (strain ATCC 49405 / DSM 1227 / KCTC 32145 / OM5) (Oligotropha carboxidovorans).